We begin with the raw amino-acid sequence, 218 residues long: Adenylate kinase (218 aa).

ATP is bound at residue 10–15 (GAGKGT). The segment at 30–59 (STGDMLRAAVKAGTPLGLEAKAIMDAGGLV) is NMP. AMP is bound by residues threonine 31, arginine 36, 57-59 (GLV), 85-88 (GFPR), and glutamine 92. Residues 122–159 (GRRVHLASGRTYHVTFNPPKAAGKDDVTGEDLVQRDDD) are LID. ATP is bound by residues arginine 123 and 132–133 (TY). AMP-binding residues include arginine 156 and arginine 167. Position 203 (arginine 203) interacts with ATP.

The protein belongs to the adenylate kinase family. In terms of assembly, monomer.

The protein localises to the cytoplasm. The catalysed reaction is AMP + ATP = 2 ADP. Its pathway is purine metabolism; AMP biosynthesis via salvage pathway; AMP from ADP: step 1/1. Functionally, catalyzes the reversible transfer of the terminal phosphate group between ATP and AMP. Plays an important role in cellular energy homeostasis and in adenine nucleotide metabolism. The sequence is that of Adenylate kinase from Chromobacterium violaceum (strain ATCC 12472 / DSM 30191 / JCM 1249 / CCUG 213 / NBRC 12614 / NCIMB 9131 / NCTC 9757 / MK).